Reading from the N-terminus, the 225-residue chain is Ribonuclease 3 (225 aa).

In terms of domain architecture, RNase III spans 7–129 (IPRLCRTLGY…IIGAIYLDSD (123 aa)). Residue E42 participates in Mg(2+) binding. Residue D46 is part of the active site. Positions 115 and 118 each coordinate Mg(2+). E118 is a catalytic residue. The DRBM domain occupies 155–225 (DPKTLLQEYL…AAQVLELIKK (71 aa)).

This sequence belongs to the ribonuclease III family. In terms of assembly, homodimer. The cofactor is Mg(2+).

It is found in the cytoplasm. It carries out the reaction Endonucleolytic cleavage to 5'-phosphomonoester.. Its function is as follows. Digests double-stranded RNA. Involved in the processing of primary rRNA transcript to yield the immediate precursors to the large and small rRNAs (23S and 16S). Processes some mRNAs, and tRNAs when they are encoded in the rRNA operon. Processes pre-crRNA and tracrRNA of type II CRISPR loci if present in the organism. This is Ribonuclease 3 from Shewanella pealeana (strain ATCC 700345 / ANG-SQ1).